The chain runs to 365 residues: Protein RecA (365 aa).

69–76 is a binding site for ATP; that stretch reads GPESSGKT. Positions 344–365 are disordered; the sequence is LDDNPDTDDHDVEDIDENTDEE. The span at 347–365 shows a compositional bias: acidic residues; that stretch reads NPDTDDHDVEDIDENTDEE.

The protein belongs to the RecA family.

It is found in the cytoplasm. Can catalyze the hydrolysis of ATP in the presence of single-stranded DNA, the ATP-dependent uptake of single-stranded DNA by duplex DNA, and the ATP-dependent hybridization of homologous single-stranded DNAs. It interacts with LexA causing its activation and leading to its autocatalytic cleavage. This Arthrospira platensis (Spirulina platensis) protein is Protein RecA.